A 205-amino-acid chain; its full sequence is Probable anaerobic dimethyl sulfoxide reductase chain YnfG (205 aa).

4Fe-4S ferredoxin-type domains follow at residues tyrosine 5–glutamate 33, phenylalanine 59–aspartate 89, and glycine 90–glutamate 119. Residues cysteine 14, cysteine 17, cysteine 20, cysteine 24, cysteine 67, cysteine 70, cysteine 75, cysteine 79, cysteine 99, cysteine 102, cysteine 105, cysteine 109, cysteine 126, cysteine 129, cysteine 141, and cysteine 145 each coordinate [4Fe-4S] cluster. The segment at isoleucine 183–valine 205 is disordered. The segment covering asparagine 186 to threonine 195 has biased composition (polar residues).

In terms of assembly, the complex consists of three subunits: YnfF, the reductase; YnfG, an electron transfer protein, and YnfH, a membrane anchor protein. [4Fe-4S] cluster serves as cofactor.

In terms of biological role, electron transfer subunit of the terminal reductase during anaerobic growth on various sulfoxide and N-oxide compounds. The protein is Probable anaerobic dimethyl sulfoxide reductase chain YnfG (ynfG) of Escherichia coli O6:H1 (strain CFT073 / ATCC 700928 / UPEC).